The following is a 274-amino-acid chain: HTH-type transcriptional regulator GadX (274 aa).

In terms of domain architecture, HTH araC/xylS-type spans 145–242 (TRVCTVINNN…GMTPTEYQER (98 aa)). 2 DNA-binding regions (H-T-H motif) span residues 162-183 (ARIA…REEE) and 209-232 (IKRV…RNYY).

As to quaternary structure, homodimer.

In terms of biological role, positively regulates the expression of about fifteen genes involved in acid resistance such as gadA, gadB and gadC. Depending on the conditions (growth phase and medium), can repress gadW. In Escherichia coli O157:H7, this protein is HTH-type transcriptional regulator GadX (gadX).